Consider the following 1093-residue polypeptide: Semaphorin-5B (1093 aa).

Residues 1–19 (MVVPGPLALSLLLSSLTLL) form the signal peptide. Over 20 to 978 (VSHLSSSQDI…TSCGGFNLIH (959 aa)) the chain is Extracellular. The Sema domain maps to 45–495 (HPIVAFEDLK…LSDRVLRVPL (451 aa)). Residues N59 and N95 are each glycosylated (N-linked (GlcNAc...) asparagine). Disulfide bonds link C114/C124 and C141/C150. Residues N157, N178, and N287 are each glycosylated (N-linked (GlcNAc...) asparagine). 2 cysteine pairs are disulfide-bonded: C264–C367 and C288–C330. 6 N-linked (GlcNAc...) asparagine glycosylation sites follow: N333, N378, N532, N539, N547, and N602. TSP type-1 domains are found at residues 551–605 (DGGF…NCSR), 606–662 (NGAW…TPCP), 664–713 (PIFW…EACP), 721–776 (WTPW…ACDT), 795–850 (NGGW…QACP), 852–907 (RGAW…QACP), and 908–952 (EGWS…RPCP). 6 disulfides stabilise this stretch: C618–C655, C622–C661, C633–C645, C676–C707, C680–C712, and C691–C697. An N-linked (GlcNAc...) asparagine glycan is attached at N728. 6 disulfides stabilise this stretch: C807–C844, C811–C849, C822–C834, C864–C901, C868–C906, and C879–C891. Residue N944 is glycosylated (N-linked (GlcNAc...) asparagine). A helical transmembrane segment spans residues 979–999 (LIVTGVSCFLVSGLLTLAVYL). Over 1000–1093 (SCQHCQRQSQ…SPGQRCFPNS (94 aa)) the chain is Cytoplasmic.

This sequence belongs to the semaphorin family. In terms of tissue distribution, in adult, only detected in brain.

The protein resides in the membrane. Functionally, may act as a positive axonal guidance cue. The polypeptide is Semaphorin-5B (Sema5b) (Mus musculus (Mouse)).